Here is a 771-residue protein sequence, read N- to C-terminus: MPTGLGYDFLRPVEDSGINDLKHYYFMADLADGQPLGRANLYSVCFDLATTDRKLTPAWRTTIKRWFPGFMTFRFLECGLLTMVSNPLALRSDTDLERVLPVLAGQMDQLAHDDGSDFLMIRDVDPEHYQRYLDILRPLGFRPALGFSRVDTTISWSSVEEALGCLSHKRRLPLKTSLEFRERFGIEVEELDEYAEHAPVLARLWRNVKTEAKDYQREDLNPEFFAACSRHLHGRSRLWLFRYQGTPIAFFLNVWGADENYILLEWGIDRDFEHYRKANLYRAALMLSLKDAISRDKRRMEMGITNYFTKLRIPGARVIPTIYFLRHSTDPVHTATLARMMMHNIQRPTLPDDMSEEFCRWEERIRLDQDGLPEHDIFRKIDRQHKYTGLKLGGVYGFYPRFTGPQRSTVKAAELGEIVLLGTNSYLGLATHPEVVEASAEATRRYGTGCSGSPLLNGTLDLHVSLEQELACFLGKPAAVLCSTGYQSNLAAISALCESGDMIIQDALNHRSLFDAARLSGADFTLYRHNDMDHLARVLRRTEGRRRIIVVDAVFSMEGTVADLATIAELADRHGCRVYVDESHALGVLGPDGRGASAALGVLARMDVVMGTFSKSFASVGGFIAGDRPVVDYIRHNGSGHVFSASLPPAAAAATHAALRVSRREPDRRARVLAAAEYMATGLARQGYQAEYHGTAIVPVILGNPTVAHAGYLRLMRSGVYVNPVAPPAVPEERSGFRTSYLADHRQSDLDRALHVFAGLAEDLTPQGAAL.

Positions 1–418 are unknown; it reads MPTGLGYDFL…TVKAAELGEI (418 aa). Arg-407 is a binding site for substrate. Residues 419 to 771 form a KAPA synthase region; the sequence is VLLGTNSYLG…EDLTPQGAAL (353 aa). A pyridoxal 5'-phosphate-binding site is contributed by 485–486; that stretch reads GY. His-510 provides a ligand contact to substrate. Pyridoxal 5'-phosphate-binding positions include Ser-556 and 581 to 584; that span reads DESH. Lys-615 is modified (N6-(pyridoxal phosphate)lysine).

It in the C-terminal section; belongs to the class-II pyridoxal-phosphate-dependent aminotransferase family. BioF subfamily. Pyridoxal 5'-phosphate is required as a cofactor.

It carries out the reaction 6-carboxyhexanoyl-[ACP] + L-alanine + H(+) = (8S)-8-amino-7-oxononanoate + holo-[ACP] + CO2. Functionally, catalyzes the decarboxylative condensation of pimeloyl-[acyl-carrier protein] and L-alanine to produce 8-amino-7-oxononanoate (AON), [acyl-carrier protein], and carbon dioxide. This chain is Putative 8-amino-7-oxononanoate synthase 2 (bioF2), found in Mycobacterium tuberculosis (strain CDC 1551 / Oshkosh).